Here is a 172-residue protein sequence, read N- to C-terminus: Cyclin-L1 (172 aa).

The disordered stretch occupies residues 1-36 (MASGPHSTATAAAAASSAAPSAGGSSSGTTTTTTTT). A cyclin-like region spans residues 88–168 (ELIQAAGILL…LRGKSDQLHL (81 aa)).

Belongs to the cyclin family. Cyclin L subfamily. As to quaternary structure, interacts with POLR2A via its hyperphosphorylated C-terminal domain (CTD). Interacts with CDK11A, CDK11B, CDK12 and CDK13. May form a ternary complex with CDK11B and casein kinase II (CKII). Interacts with pre-mRNA-splicing factors, including at least SRSF1, SRSF2 and SRSF7/SLU7.

Its subcellular location is the nucleus speckle. The protein resides in the nucleus. The protein localises to the nucleoplasm. Its function is as follows. Involved in pre-mRNA splicing. Functions in association with cyclin-dependent kinases (CDKs). May play a role in the regulation of RNA polymerase II (pol II). Inhibited by the CDK-specific inhibitor CDKN1A/p21. In Pongo abelii (Sumatran orangutan), this protein is Cyclin-L1 (CCNL1).